The chain runs to 350 residues: Phosphotriesterase-related protein (350 aa).

A divalent metal cation is bound by residues His22, His24, Glu169, His201, His230, and Asp298.

Belongs to the metallo-dependent hydrolases superfamily. Phosphotriesterase family. Requires a divalent metal cation as cofactor.

This chain is Phosphotriesterase-related protein, found in Drosophila yakuba (Fruit fly).